Reading from the N-terminus, the 131-residue chain is U-scoloptoxin-Er5e (131 aa).

An N-terminal signal peptide occupies residues 1–22 (MKTNCEFPLLCLLIVLVANVEG). Residues 23 to 94 (EVEDNELKMV…KRLWRNWERR (72 aa)) constitute a propeptide that is removed on maturation. RLWRNWE repeat units follow at residues 34 to 40 (RLWRNWE), 61 to 67 (RLWRNWE), and 86 to 92 (RLWRNWE). Pyrrolidone carboxylic acid is present on Q95. The RLWRNWE 4; approximate repeat unit spans residues 107–113 (ELWRNWE). Positions 112–131 (WEDLKRRQVVDLNDEQKTTG) are excised as a propeptide.

Belongs to the scoloptoxin-08 family. Expressed by the venom gland.

The protein localises to the secreted. This is U-scoloptoxin-Er5e from Ethmostigmus rubripes (Giant centipede).